The sequence spans 211 residues: Protein-L-isoaspartate O-methyltransferase (211 aa).

S60 is a catalytic residue.

Belongs to the methyltransferase superfamily. L-isoaspartyl/D-aspartyl protein methyltransferase family.

It is found in the cytoplasm. It catalyses the reaction [protein]-L-isoaspartate + S-adenosyl-L-methionine = [protein]-L-isoaspartate alpha-methyl ester + S-adenosyl-L-homocysteine. In terms of biological role, catalyzes the methyl esterification of L-isoaspartyl residues in peptides and proteins that result from spontaneous decomposition of normal L-aspartyl and L-asparaginyl residues. It plays a role in the repair and/or degradation of damaged proteins. The sequence is that of Protein-L-isoaspartate O-methyltransferase from Pseudomonas savastanoi pv. phaseolicola (strain 1448A / Race 6) (Pseudomonas syringae pv. phaseolicola (strain 1448A / Race 6)).